A 539-amino-acid chain; its full sequence is Kynureninase 2 (539 aa).

The interval 60 to 87 (DGGVAGETKEPRVPNGVSSATKPNGTVN) is disordered. Over residues 75-87 (GVSSATKPNGTVN) the composition is skewed to polar residues. Pyridoxal 5'-phosphate contacts are provided by residues leucine 171, threonine 172, 199-202 (FPSD), aspartate 290, histidine 293, and tyrosine 315. Lysine 316 is modified (N6-(pyridoxal phosphate)lysine). Over residues 340–352 (GGGGSGGVGGGRG) the composition is skewed to gly residues. A disordered region spans residues 340 to 363 (GGGGSGGVGGGRGEGGDGDGGDGG). 2 residues coordinate pyridoxal 5'-phosphate: tryptophan 379 and asparagine 407.

It belongs to the kynureninase family. Homodimer. Pyridoxal 5'-phosphate is required as a cofactor.

The protein localises to the cytoplasm. It catalyses the reaction L-kynurenine + H2O = anthranilate + L-alanine + H(+). The enzyme catalyses 3-hydroxy-L-kynurenine + H2O = 3-hydroxyanthranilate + L-alanine + H(+). It participates in amino-acid degradation; L-kynurenine degradation; L-alanine and anthranilate from L-kynurenine: step 1/1. The protein operates within cofactor biosynthesis; NAD(+) biosynthesis; quinolinate from L-kynurenine: step 2/3. In terms of biological role, catalyzes the cleavage of L-kynurenine (L-Kyn) and L-3-hydroxykynurenine (L-3OHKyn) into anthranilic acid (AA) and 3-hydroxyanthranilic acid (3-OHAA), respectively. The sequence is that of Kynureninase 2 from Chaetomium globosum (strain ATCC 6205 / CBS 148.51 / DSM 1962 / NBRC 6347 / NRRL 1970) (Soil fungus).